We begin with the raw amino-acid sequence, 484 residues long: Cobyric acid synthase (484 aa).

The GATase cobBQ-type domain maps to 251 to 438 (ALKIAVPVLS…LHGLFGNDEY (188 aa)). C333 acts as the Nucleophile in catalysis. Residue H430 is part of the active site.

It belongs to the CobB/CobQ family. CobQ subfamily.

The protein operates within cofactor biosynthesis; adenosylcobalamin biosynthesis. Functionally, catalyzes amidations at positions B, D, E, and G on adenosylcobyrinic A,C-diamide. NH(2) groups are provided by glutamine, and one molecule of ATP is hydrogenolyzed for each amidation. In Allorhizobium ampelinum (strain ATCC BAA-846 / DSM 112012 / S4) (Agrobacterium vitis (strain S4)), this protein is Cobyric acid synthase.